The primary structure comprises 475 residues: Cytosolic enolase 3 (475 aa).

Residue Ser2 is modified to N-acetylserine. Substrate is bound by residues His200 and Glu209. Asp252 (proton donor) is an active-site residue. Positions 287, 336, and 361 each coordinate Mg(2+). Substrate contacts are provided by Glu336 and Asp361. Lys386 serves as the catalytic Proton acceptor. Residues 413-416 (SHRC) and Lys437 contribute to the substrate site.

The protein belongs to the enolase family. Homodimer. Mg(2+) is required as a cofactor.

The protein resides in the cytoplasm. The protein localises to the nucleus. It carries out the reaction (2R)-2-phosphoglycerate = phosphoenolpyruvate + H2O. The protein operates within carbohydrate degradation; glycolysis; pyruvate from D-glyceraldehyde 3-phosphate: step 4/5. This Arabidopsis thaliana (Mouse-ear cress) protein is Cytosolic enolase 3 (ENO3).